Reading from the N-terminus, the 284-residue chain is 4-hydroxybenzoate octaprenyltransferase (284 aa).

The next 9 helical transmembrane spans lie at 19-39 (IGSL…AQGL), 42-62 (LRVL…GCVI), 93-113 (LLLF…MNTL), 114-134 (TIQL…MKRF), 136-156 (HLPQ…AWAA), 158-178 (ANTL…WTIA), 210-230 (IIGL…QGLA), 233-253 (TSYY…QHLI), and 264-284 (AFLN…LSVW).

The protein belongs to the UbiA prenyltransferase family. It depends on Mg(2+) as a cofactor.

It localises to the cell inner membrane. It carries out the reaction all-trans-octaprenyl diphosphate + 4-hydroxybenzoate = 4-hydroxy-3-(all-trans-octaprenyl)benzoate + diphosphate. It participates in cofactor biosynthesis; ubiquinone biosynthesis. Catalyzes the prenylation of para-hydroxybenzoate (PHB) with an all-trans polyprenyl group. Mediates the second step in the final reaction sequence of ubiquinone-8 (UQ-8) biosynthesis, which is the condensation of the polyisoprenoid side chain with PHB, generating the first membrane-bound Q intermediate 3-octaprenyl-4-hydroxybenzoate. The chain is 4-hydroxybenzoate octaprenyltransferase from Vibrio cholerae serotype O1 (strain ATCC 39541 / Classical Ogawa 395 / O395).